The sequence spans 117 residues: uncharacterized protein (117 aa).

The chain crosses the membrane as a helical span at residues 76-96 (FIMSSGCFLIASLSCVGLTVF).

The protein localises to the membrane. This is an uncharacterized protein from Saccharomyces cerevisiae (strain ATCC 204508 / S288c) (Baker's yeast).